The following is a 393-amino-acid chain: Phosphatidate cytidylyltransferase (393 aa).

8 consecutive transmembrane segments (helical) span residues 49-69 (NFFR…WISV), 73-93 (IYSF…IIGI), 108-128 (IILG…IMMM), 141-161 (LSFV…ASLR), 171-191 (LFAL…CAIF), 198-218 (FWFV…YVVG), 237-257 (GFIG…HLHV), and 290-310 (IHII…GFLA).

This sequence belongs to the CDS family.

The protein localises to the membrane. The catalysed reaction is a 1,2-diacyl-sn-glycero-3-phosphate + CTP + H(+) = a CDP-1,2-diacyl-sn-glycerol + diphosphate. It participates in phospholipid metabolism; CDP-diacylglycerol biosynthesis; CDP-diacylglycerol from sn-glycerol 3-phosphate: step 3/3. This is Phosphatidate cytidylyltransferase (CDS1) from Encephalitozoon cuniculi (strain GB-M1) (Microsporidian parasite).